Here is a 487-residue protein sequence, read N- to C-terminus: N-succinylglutamate 5-semialdehyde dehydrogenase (487 aa).

221–226 is an NAD(+) binding site; that stretch reads GSSDTG. Active-site residues include Glu-244 and Cys-278.

It belongs to the aldehyde dehydrogenase family. AstD subfamily.

It catalyses the reaction N-succinyl-L-glutamate 5-semialdehyde + NAD(+) + H2O = N-succinyl-L-glutamate + NADH + 2 H(+). Its pathway is amino-acid degradation; L-arginine degradation via AST pathway; L-glutamate and succinate from L-arginine: step 4/5. Functionally, catalyzes the NAD-dependent reduction of succinylglutamate semialdehyde into succinylglutamate. The protein is N-succinylglutamate 5-semialdehyde dehydrogenase of Burkholderia cenocepacia (strain ATCC BAA-245 / DSM 16553 / LMG 16656 / NCTC 13227 / J2315 / CF5610) (Burkholderia cepacia (strain J2315)).